Consider the following 184-residue polypeptide: Glutathione-regulated potassium-efflux system ancillary protein KefG (184 aa).

The protein belongs to the NAD(P)H dehydrogenase (quinone) family. KefG subfamily. Interacts with KefB.

It is found in the cell inner membrane. It catalyses the reaction a quinone + NADH + H(+) = a quinol + NAD(+). The enzyme catalyses a quinone + NADPH + H(+) = a quinol + NADP(+). In terms of biological role, regulatory subunit of a potassium efflux system that confers protection against electrophiles. Required for full activity of KefB. The sequence is that of Glutathione-regulated potassium-efflux system ancillary protein KefG from Escherichia coli O1:K1 / APEC.